Here is a 555-residue protein sequence, read N- to C-terminus: Suppressor of tumorigenicity 7 protein-like (555 aa).

A run of 4 helical transmembrane segments spans residues 32-52, 76-96, 504-524, and 531-551; these read APWA…YAAL, FYFA…VFEW, LPFF…LALL, and LMVV…APSV.

The protein belongs to the ST7 family.

It localises to the membrane. This is Suppressor of tumorigenicity 7 protein-like (ST7L) from Gallus gallus (Chicken).